Reading from the N-terminus, the 180-residue chain is 3-deoxy-D-manno-octulosonate 8-phosphate phosphatase KdsC (180 aa).

The Mg(2+) site is built by Asp-14 and Asp-16. Substrate-binding positions include Asp-16, 37–41, Lys-45, Arg-60, Arg-68, and Lys-84; that span reads HVRDG. Residue Asp-107 participates in Mg(2+) binding.

The protein belongs to the KdsC family. As to quaternary structure, homotetramer. Requires Mg(2+) as cofactor.

It carries out the reaction 3-deoxy-alpha-D-manno-2-octulosonate-8-phosphate + H2O = 3-deoxy-alpha-D-manno-oct-2-ulosonate + phosphate. In terms of biological role, catalyzes the hydrolysis of 3-deoxy-D-manno-octulosonate 8-phosphate (KDO 8-P) to 3-deoxy-D-manno-octulosonate (KDO) and inorganic phosphate. In Haemophilus influenzae (strain ATCC 51907 / DSM 11121 / KW20 / Rd), this protein is 3-deoxy-D-manno-octulosonate 8-phosphate phosphatase KdsC.